A 172-amino-acid chain; its full sequence is Signal peptidase complex catalytic subunit SEC11 (172 aa).

The Cytoplasmic segment spans residues 1 to 14 (MLSGLQNPRQAAAQ). The helical; Signal-anchor for type II membrane protein transmembrane segment at 15 to 35 (LMNFALILSTAFMMWKGLSVA) threads the bilayer. The Lumenal segment spans residues 36–172 (TDSPSPIVVV…MGLLVVIQRE (137 aa)). Active-site charge relay system residues include Ser-49, His-90, and Asp-115. The segment at 158–169 (VMLGIMGLLVVI) is C-terminal short (CTS) helix.

Belongs to the peptidase S26B family. In terms of assembly, component of the signal peptidase complex (SPC) composed of a catalytic subunit SEC11 and three accessory subunits SPC1, SPC2 and SPC3. The complex induces a local thinning of the ER membrane which is used to measure the length of the signal peptide (SP) h-region of protein substrates. This ensures the selectivity of the complex towards h-regions shorter than 18-20 amino acids. SPC associates with the translocon complex.

The protein resides in the endoplasmic reticulum membrane. It carries out the reaction Cleavage of hydrophobic, N-terminal signal or leader sequences from secreted and periplasmic proteins.. Its function is as follows. Catalytic component of the signal peptidase complex (SPC) which catalyzes the cleavage of N-terminal signal sequences from nascent proteins as they are translocated into the lumen of the endoplasmic reticulum. Specifically cleaves N-terminal signal peptides that contain a hydrophobic alpha-helix (h-region) shorter than 18-20 amino acids. The polypeptide is Signal peptidase complex catalytic subunit SEC11 (SEC11) (Metarhizium acridum (strain CQMa 102)).